Consider the following 489-residue polypeptide: Ketol-acid reductoisomerase (NADP(+)) (489 aa).

The KARI N-terminal Rossmann domain maps to 17 to 208; that stretch reads LGVCEFMEQS…GGHKAGVLRS (192 aa). NADP(+) contacts are provided by residues 45 to 48, R68, R76, S78, and 108 to 110; these read CGAQ and DKQ. Residue H132 is part of the active site. G158 serves as a coordination point for NADP(+). 2 KARI C-terminal knotted domains span residues 209-344 and 345-485; these read SFVA…KTAP and QEAP…MTAM. Residues D217, E221, E389, and E393 each coordinate Mg(2+). S414 contributes to the substrate binding site.

This sequence belongs to the ketol-acid reductoisomerase family. Mg(2+) is required as a cofactor.

It carries out the reaction (2R)-2,3-dihydroxy-3-methylbutanoate + NADP(+) = (2S)-2-acetolactate + NADPH + H(+). It catalyses the reaction (2R,3R)-2,3-dihydroxy-3-methylpentanoate + NADP(+) = (S)-2-ethyl-2-hydroxy-3-oxobutanoate + NADPH + H(+). It functions in the pathway amino-acid biosynthesis; L-isoleucine biosynthesis; L-isoleucine from 2-oxobutanoate: step 2/4. Its pathway is amino-acid biosynthesis; L-valine biosynthesis; L-valine from pyruvate: step 2/4. Its function is as follows. Involved in the biosynthesis of branched-chain amino acids (BCAA). Catalyzes an alkyl-migration followed by a ketol-acid reduction of (S)-2-acetolactate (S2AL) to yield (R)-2,3-dihydroxy-isovalerate. In the isomerase reaction, S2AL is rearranged via a Mg-dependent methyl migration to produce 3-hydroxy-3-methyl-2-ketobutyrate (HMKB). In the reductase reaction, this 2-ketoacid undergoes a metal-dependent reduction by NADPH to yield (R)-2,3-dihydroxy-isovalerate. The polypeptide is Ketol-acid reductoisomerase (NADP(+)) (Flavobacterium johnsoniae (strain ATCC 17061 / DSM 2064 / JCM 8514 / BCRC 14874 / CCUG 350202 / NBRC 14942 / NCIMB 11054 / UW101) (Cytophaga johnsonae)).